An 81-amino-acid chain; its full sequence is UPF0180 protein YkuS (81 aa).

The protein belongs to the UPF0180 family.

The protein is UPF0180 protein YkuS (ykuS) of Bacillus subtilis (strain 168).